The sequence spans 207 residues: Small ribosomal subunit protein uS4c (207 aa).

An S4 RNA-binding domain is found at 92–156; sequence MRLDNILFRL…YQSIITKRIE (65 aa).

It belongs to the universal ribosomal protein uS4 family. In terms of assembly, part of the 30S ribosomal subunit. Contacts protein S5. The interaction surface between S4 and S5 is involved in control of translational fidelity.

It localises to the plastid. The protein resides in the chloroplast. Its function is as follows. One of the primary rRNA binding proteins, it binds directly to 16S rRNA where it nucleates assembly of the body of the 30S subunit. With S5 and S12 plays an important role in translational accuracy. The polypeptide is Small ribosomal subunit protein uS4c (rps4) (Equisetum palustre (Marsh horsetail)).